The sequence spans 215 residues: Probable GTP-binding protein EngB (215 aa).

The EngB-type G domain occupies 31-215 (GPPEIAFAGR…RTAILQAVVQ (185 aa)). GTP contacts are provided by residues 39–46 (GRSNVGKS), 66–70 (GRTQE), 93–96 (DMPG), 160–163 (TKSD), and 194–196 (TSA). Positions 46 and 68 each coordinate Mg(2+).

Belongs to the TRAFAC class TrmE-Era-EngA-EngB-Septin-like GTPase superfamily. EngB GTPase family. Requires Mg(2+) as cofactor.

In terms of biological role, necessary for normal cell division and for the maintenance of normal septation. In Bartonella bacilliformis (strain ATCC 35685 / KC583 / Herrer 020/F12,63), this protein is Probable GTP-binding protein EngB.